Reading from the N-terminus, the 454-residue chain is tRNA modification GTPase MnmE (454 aa).

(6S)-5-formyl-5,6,7,8-tetrahydrofolate contacts are provided by Arg-23, Glu-80, and Lys-120. The 162-residue stretch at 216-377 folds into the TrmE-type G domain; sequence GMKVVIAGRP…LRDHLKQSMG (162 aa). Asn-226 serves as a coordination point for K(+). GTP-binding positions include 226-231, 245-251, 270-273, 335-338, and 358-360; these read NAGKSS, TDIAGTT, DTAG, NKAD, and SAR. Ser-230 provides a ligand contact to Mg(2+). Positions 245, 247, and 250 each coordinate K(+). Mg(2+) is bound at residue Thr-251. Lys-454 is a binding site for (6S)-5-formyl-5,6,7,8-tetrahydrofolate.

The protein belongs to the TRAFAC class TrmE-Era-EngA-EngB-Septin-like GTPase superfamily. TrmE GTPase family. As to quaternary structure, homodimer. Heterotetramer of two MnmE and two MnmG subunits. Requires K(+) as cofactor.

The protein localises to the cytoplasm. Functionally, exhibits a very high intrinsic GTPase hydrolysis rate. Involved in the addition of a carboxymethylaminomethyl (cmnm) group at the wobble position (U34) of certain tRNAs, forming tRNA-cmnm(5)s(2)U34. This chain is tRNA modification GTPase MnmE, found in Yersinia pestis.